The chain runs to 109 residues: Parvalbumin alpha (109 aa).

Serine 1 carries the post-translational modification N-acetylserine. EF-hand domains are found at residues 38-73 (KSDA…FSDG) and 77-109 (LNDK…AKMT). Ca(2+) is bound by residues aspartate 51, aspartate 53, serine 55, tyrosine 57, glutamate 59, glutamate 62, aspartate 90, aspartate 92, aspartate 94, lysine 96, and glutamate 101.

The protein belongs to the parvalbumin family. In terms of assembly, monomer.

Its function is as follows. In muscle, parvalbumin is thought to be involved in relaxation after contraction. It binds two calcium ions. This chain is Parvalbumin alpha, found in Raja clavata (Thornback ray).